Here is a 165-residue protein sequence, read N- to C-terminus: SsrA-binding protein (165 aa).

It belongs to the SmpB family.

Its subcellular location is the cytoplasm. Functionally, required for rescue of stalled ribosomes mediated by trans-translation. Binds to transfer-messenger RNA (tmRNA), required for stable association of tmRNA with ribosomes. tmRNA and SmpB together mimic tRNA shape, replacing the anticodon stem-loop with SmpB. tmRNA is encoded by the ssrA gene; the 2 termini fold to resemble tRNA(Ala) and it encodes a 'tag peptide', a short internal open reading frame. During trans-translation Ala-aminoacylated tmRNA acts like a tRNA, entering the A-site of stalled ribosomes, displacing the stalled mRNA. The ribosome then switches to translate the ORF on the tmRNA; the nascent peptide is terminated with the 'tag peptide' encoded by the tmRNA and targeted for degradation. The ribosome is freed to recommence translation, which seems to be the essential function of trans-translation. This Prochlorococcus marinus (strain MIT 9515) protein is SsrA-binding protein.